Here is a 270-residue protein sequence, read N- to C-terminus: Putative hydro-lyase ACIAD2519 (270 aa).

This sequence belongs to the D-glutamate cyclase family.

In Acinetobacter baylyi (strain ATCC 33305 / BD413 / ADP1), this protein is Putative hydro-lyase ACIAD2519.